The chain runs to 413 residues: Serine hydroxymethyltransferase (413 aa).

Residues Leu119 and 123–125 each bind (6S)-5,6,7,8-tetrahydrofolate; that span reads GHL. Lys228 carries the N6-(pyridoxal phosphate)lysine modification. Position 243 (Glu243) interacts with (6S)-5,6,7,8-tetrahydrofolate.

This sequence belongs to the SHMT family. In terms of assembly, homodimer. Pyridoxal 5'-phosphate serves as cofactor.

The protein localises to the cytoplasm. The catalysed reaction is (6R)-5,10-methylene-5,6,7,8-tetrahydrofolate + glycine + H2O = (6S)-5,6,7,8-tetrahydrofolate + L-serine. It participates in one-carbon metabolism; tetrahydrofolate interconversion. Its pathway is amino-acid biosynthesis; glycine biosynthesis; glycine from L-serine: step 1/1. Its function is as follows. Catalyzes the reversible interconversion of serine and glycine with tetrahydrofolate (THF) serving as the one-carbon carrier. This reaction serves as the major source of one-carbon groups required for the biosynthesis of purines, thymidylate, methionine, and other important biomolecules. Also exhibits THF-independent aldolase activity toward beta-hydroxyamino acids, producing glycine and aldehydes, via a retro-aldol mechanism. The protein is Serine hydroxymethyltransferase of Desulforamulus reducens (strain ATCC BAA-1160 / DSM 100696 / MI-1) (Desulfotomaculum reducens).